A 1171-amino-acid polypeptide reads, in one-letter code: Phytochrome B (1171 aa).

Residues 1–19 (MASGSRATPTRSPSSARPA) are compositionally biased toward low complexity. The tract at residues 1 to 53 (MASGSRATPTRSPSSARPAAPRHQHHHSQSSGGSTSRAGGGGGGGGGGGGGAA) is disordered. The span at 38-52 (AGGGGGGGGGGGGGA) shows a compositional bias: gly residues. Residues 259 to 442 (DVKLLCDTVV…AFGLQLNMEL (184 aa)) form the GAF domain. A phytochromobilin-binding site is contributed by C364. 2 PAS domains span residues 661–732 (VARE…LRGD) and 795–866 (DYKA…MIVL). The Histidine kinase domain occupies 943 to 1161 (YIYQEIKNPL…FFHIVLELPQ (219 aa)).

The protein belongs to the phytochrome family. In terms of assembly, homodimer. Contains one covalently linked phytochromobilin chromophore.

Its function is as follows. Regulatory photoreceptor which exists in two forms that are reversibly interconvertible by light: the Pr form that absorbs maximally in the red region of the spectrum and the Pfr form that absorbs maximally in the far-red region. Photoconversion of Pr to Pfr induces an array of morphogenic responses, whereas reconversion of Pfr to Pr cancels the induction of those responses. Pfr controls the expression of a number of nuclear genes including those encoding the small subunit of ribulose-bisphosphate carboxylase, chlorophyll A/B binding protein, protochlorophyllide reductase, rRNA, etc. It also controls the expression of its own gene(s) in a negative feedback fashion. This chain is Phytochrome B (PHYB), found in Oryza sativa subsp. indica (Rice).